Reading from the N-terminus, the 320-residue chain is Putative S-adenosyl-L-methionine-dependent methyltransferase MAP_4078 (320 aa).

S-adenosyl-L-methionine is bound by residues Asp132 and Asp161 to Leu162. The tract at residues Pro294–Arg320 is disordered.

The protein belongs to the UPF0677 family.

In terms of biological role, exhibits S-adenosyl-L-methionine-dependent methyltransferase activity. This Mycolicibacterium paratuberculosis (strain ATCC BAA-968 / K-10) (Mycobacterium paratuberculosis) protein is Putative S-adenosyl-L-methionine-dependent methyltransferase MAP_4078.